The chain runs to 100 residues: MIGLNHYLIVSGLLFCIGLAGMLKRKNILLLFFSTEIMLNAINIGFVAISRYTHNLDGQMFALFIIAIAASEVAIGLGLVILWFKKYKSLDIDSLNAMKG.

3 helical membrane passes run 1–21 (MIGL…GLAG), 28–48 (ILLL…GFVA), and 64–84 (FIIA…ILWF).

It belongs to the complex I subunit 4L family. In terms of assembly, NDH-1 is composed of 14 different subunits. Subunits NuoA, H, J, K, L, M, N constitute the membrane sector of the complex.

It localises to the cell inner membrane. It carries out the reaction a quinone + NADH + 5 H(+)(in) = a quinol + NAD(+) + 4 H(+)(out). NDH-1 shuttles electrons from NADH, via FMN and iron-sulfur (Fe-S) centers, to quinones in the respiratory chain. The immediate electron acceptor for the enzyme in this species is believed to be ubiquinone. Couples the redox reaction to proton translocation (for every two electrons transferred, four hydrogen ions are translocated across the cytoplasmic membrane), and thus conserves the redox energy in a proton gradient. This is NADH-quinone oxidoreductase subunit K from Helicobacter pylori (strain B38).